Here is a 229-residue protein sequence, read N- to C-terminus: MSVSLSRLERQLGYSFKDQELMLLALTHRSFAGRNNERLEFLGDAILNFVAGEALFERFPQAREGQLSRLRARLVKGETLAVLARGFDLGEYLRLGSGELKSGGFRRESILADALEALIGAIYLDAGMETARDRVLSWLASEFESLTLVDTNKDPKTRLQEFLQSRACELPRYEVVDIQGEPHCRTFFVECEVTLLNEKSRGQGVSRRIAEQVAAAAALIALGVENGHD.

One can recognise an RNase III domain in the interval 5-127 (LSRLERQLGY…LIGAIYLDAG (123 aa)). Position 40 (Glu-40) interacts with Mg(2+). Asp-44 is an active-site residue. Residues Asp-113 and Glu-116 each coordinate Mg(2+). Glu-116 is an active-site residue. One can recognise a DRBM domain in the interval 154 to 224 (DPKTRLQEFL…AAAALIALGV (71 aa)).

This sequence belongs to the ribonuclease III family. In terms of assembly, homodimer. Mg(2+) is required as a cofactor.

Its subcellular location is the cytoplasm. The enzyme catalyses Endonucleolytic cleavage to 5'-phosphomonoester.. Its function is as follows. Digests double-stranded RNA. Involved in the processing of primary rRNA transcript to yield the immediate precursors to the large and small rRNAs (23S and 16S). Processes some mRNAs, and tRNAs when they are encoded in the rRNA operon. Processes pre-crRNA and tracrRNA of type II CRISPR loci if present in the organism. The sequence is that of Ribonuclease 3 from Pseudomonas fluorescens (strain ATCC BAA-477 / NRRL B-23932 / Pf-5).